The primary structure comprises 419 residues: Light-dependent chlorophyll f synthase (419 aa).

The next 5 membrane-spanning stretches (helical) occupy residues 73 to 90, 162 to 177, 186 to 200, 241 to 262, and 323 to 337; these read YIGW…TAAI, HFII…EWEL, WISL…ASVS, LHQM…HGSL, and CLAA…SAAI. Position 162 (histidine 162) interacts with a chlorophyll. Histidine 242 serves as a coordination point for a chlorophyll.

The protein belongs to the reaction center PufL/M/PsbA/D family. In terms of assembly, homodimer.

It is found in the cellular thylakoid membrane. In terms of biological role, synthesizes chlorophyll f or chlorophyllide f (Chl f, 2-formyl chlorophyll a), probably by oxidation of chlorophyll a or chlorophyllide a and reduction of plastoquinone. The reaction is probably light-dependent. Chl f absorbs far red light (FRL, 707 nm in 100% methanol), and is synthesized when cells are grown in FRL, where it provides the advantage of extending the spectral range of harvested light in terrestrial cyanobacteria. Chl f synthesis is probably light-dependent. The chain is Light-dependent chlorophyll f synthase from Synechococcus sp. (strain ATCC 29403 / PCC 7335).